A 172-amino-acid polypeptide reads, in one-letter code: Adenine phosphoribosyltransferase (172 aa).

Belongs to the purine/pyrimidine phosphoribosyltransferase family. As to quaternary structure, homodimer.

The protein localises to the cytoplasm. The catalysed reaction is AMP + diphosphate = 5-phospho-alpha-D-ribose 1-diphosphate + adenine. It functions in the pathway purine metabolism; AMP biosynthesis via salvage pathway; AMP from adenine: step 1/1. Its function is as follows. Catalyzes a salvage reaction resulting in the formation of AMP, that is energically less costly than de novo synthesis. This chain is Adenine phosphoribosyltransferase, found in Clostridium perfringens (strain ATCC 13124 / DSM 756 / JCM 1290 / NCIMB 6125 / NCTC 8237 / Type A).